The primary structure comprises 308 residues: HTH-type transcriptional activator AllS (308 aa).

The HTH lysR-type domain occupies 2 to 59 (FDPETLRTFISVAETGSFSKAAERLCKTTATTSYRIKLLEENTGVGLFFRTTRSVSLT). Residues 19–38 (FSKAAERLCKTTATTSYRIK) constitute a DNA-binding region (H-T-H motif).

It belongs to the LysR transcriptional regulatory family.

Its function is as follows. Positive regulator essential for the expression of allD operon. Binds to the allD promoter. In Salmonella typhi, this protein is HTH-type transcriptional activator AllS (allS).